Reading from the N-terminus, the 546-residue chain is Phosphomethylpyrimidine synthase (546 aa).

Residues Asn145, Met174, Tyr203, His239, 259–261 (SRG), 300–303 (DGLR), and Glu339 each bind substrate. His343 lines the Zn(2+) pocket. Position 366 (Tyr366) interacts with substrate. Position 407 (His407) interacts with Zn(2+). Residues Cys487, Cys490, and Cys495 each coordinate [4Fe-4S] cluster.

Belongs to the ThiC family. It depends on [4Fe-4S] cluster as a cofactor.

The catalysed reaction is 5-amino-1-(5-phospho-beta-D-ribosyl)imidazole + S-adenosyl-L-methionine = 4-amino-2-methyl-5-(phosphooxymethyl)pyrimidine + CO + 5'-deoxyadenosine + formate + L-methionine + 3 H(+). Its pathway is cofactor biosynthesis; thiamine diphosphate biosynthesis. Its function is as follows. Catalyzes the synthesis of the hydroxymethylpyrimidine phosphate (HMP-P) moiety of thiamine from aminoimidazole ribotide (AIR) in a radical S-adenosyl-L-methionine (SAM)-dependent reaction. The chain is Phosphomethylpyrimidine synthase from Mycobacterium ulcerans (strain Agy99).